Consider the following 419-residue polypeptide: Transcription termination factor Rho (419 aa).

Residues 48-123 (EISGDGVLEI…LKVDSINFDR (76 aa)) enclose the Rho RNA-BD domain. RNA-binding stretches follow at residues 61-66 (GFGFLR), 78-80 (DIY), and 108-110 (ERY). Residues 169 to 174 (GKGQRG), 181 to 186 (KAGKTI), and R212 contribute to the ATP site. The tract at residues 284–288 (VLTGG) is RNA-binding 2.

This sequence belongs to the Rho family. Homohexamer. The homohexamer assembles into an open ring structure.

Its function is as follows. Facilitates transcription termination by a mechanism that involves Rho binding to the nascent RNA, activation of Rho's RNA-dependent ATPase activity, and release of the mRNA from the DNA template. This Pseudomonas aeruginosa (strain ATCC 15692 / DSM 22644 / CIP 104116 / JCM 14847 / LMG 12228 / 1C / PRS 101 / PAO1) protein is Transcription termination factor Rho.